A 200-amino-acid chain; its full sequence is 5'(3')-deoxyribonucleotidase, cytosolic type (200 aa).

Asp12 serves as the catalytic Nucleophile. Mg(2+) is bound by residues Asp12 and Asp14. The Proton donor role is filled by Asp14. Positions 20, 46, 67, and 101 each coordinate substrate. The residue at position 102 (Thr102) is a Phosphothreonine. Lys136 contacts substrate. Asp147 provides a ligand contact to Mg(2+). Residue Ser184 is modified to Phosphoserine.

Belongs to the 5'(3')-deoxyribonucleotidase family. In terms of assembly, homodimer. The cofactor is Mg(2+).

The protein localises to the cytoplasm. Its function is as follows. Dephosphorylates the 5' and 2'(3')-phosphates of deoxyribonucleotides, with a preference for dUMP and dTMP, intermediate activity towards dGMP, and low activity towards dCMP and dAMP. The protein is 5'(3')-deoxyribonucleotidase, cytosolic type (Nt5c) of Mus musculus (Mouse).